The following is a 281-amino-acid chain: 2-C-methyl-D-erythritol 4-phosphate cytidylyltransferase (281 aa).

This sequence belongs to the IspD/TarI cytidylyltransferase family. IspD subfamily.

The enzyme catalyses 2-C-methyl-D-erythritol 4-phosphate + CTP + H(+) = 4-CDP-2-C-methyl-D-erythritol + diphosphate. The protein operates within isoprenoid biosynthesis; isopentenyl diphosphate biosynthesis via DXP pathway; isopentenyl diphosphate from 1-deoxy-D-xylulose 5-phosphate: step 2/6. Catalyzes the formation of 4-diphosphocytidyl-2-C-methyl-D-erythritol from CTP and 2-C-methyl-D-erythritol 4-phosphate (MEP). This is 2-C-methyl-D-erythritol 4-phosphate cytidylyltransferase from Psychrobacter arcticus (strain DSM 17307 / VKM B-2377 / 273-4).